We begin with the raw amino-acid sequence, 531 residues long: Cytochrome P450 monooxygenase ffsD (531 aa).

The chain crosses the membrane as a helical span at residues V40–V60. C475 is a heme binding site.

It belongs to the cytochrome P450 family. The cofactor is heme.

The protein resides in the membrane. It participates in mycotoxin biosynthesis. In terms of biological role, cytochrome P450 monooxygenase; part of the gene cluster that mediates the biosynthesis of the cytotoxic leucine-containing cytochalasans, including aspochalasin C, aspochalasin E, TMC-169, flavichalasine F, aspergillin PZ, aspochalasin M and flavichalasine G. The first step in the pathway is catalyzed by the hybrid PKS-NRPS ffsA that utilizes 8 units of malonyl-CoA to iteratively assemble the octaketide chain before addition of L-leucine by the C-terminal NRPS modules. Because ffsA lacks a designated enoylreductase (ER) domain, the required activity is provided the enoyl reductase fssC. The methyltransferase (MT) domain of ffsA catalyzes the alpha-methylation at C10 and C14 using S-adenosyl-L-methionine as the methyl-donating cosubstrate. Reduction by the hydrolyase ffsE, followed by dehydration and intra-molecular Diels-Alder cyclization by the Diels-Alderase ffsF then yield the required isoindolone-fused macrocycle. A number of oxidative steps catalyzed by the tailoring cytochrome P450 monooxygenase ffsD, the FAD-linked oxidoreductase ffsJ and the short-chain dehydrogenase/reductase ffsI, are further required to afford the final products. The sequence is that of Cytochrome P450 monooxygenase ffsD from Aspergillus flavipes.